A 146-amino-acid polypeptide reads, in one-letter code: Leptin (146 aa).

Residues cysteine 96 and cysteine 146 are joined by a disulfide bond.

It belongs to the leptin family.

The protein localises to the secreted. Key player in the regulation of energy balance and body weight control. Once released into the circulation, has central and peripheral effects by binding LEPR, found in many tissues, which results in the activation of several major signaling pathways. In the hypothalamus, acts as an appetite-regulating factor that induces a decrease in food intake and an increase in energy consumption by inducing anorexinogenic factors and suppressing orexigenic neuropeptides, also regulates bone mass and secretion of hypothalamo-pituitary-adrenal hormones. In the periphery, increases basal metabolism, influences reproductive function, regulates pancreatic beta-cell function and insulin secretion, is pro-angiogenic for endothelial cell and affects innate and adaptive immunity. In the arcuate nucleus of the hypothalamus, activates by depolarization POMC neurons inducing FOS and SOCS3 expression to release anorexigenic peptides and inhibits by hyperpolarization NPY neurons inducing SOCS3 with a consequent reduction on release of orexigenic peptides. In addition to its known satiety inducing effect, has a modulatory role in nutrient absorption. In the intestine, reduces glucose absorption by enterocytes by activating PKC and leading to a sequential activation of p38, PI3K and ERK signaling pathways which exerts an inhibitory effect on glucose absorption. Acts as a growth factor on certain tissues, through the activation of different signaling pathways increases expression of genes involved in cell cycle regulation such as CCND1, via JAK2-STAT3 pathway, or VEGFA, via MAPK1/3 and PI3K-AKT1 pathways. May also play an apoptotic role via JAK2-STAT3 pathway and up-regulation of BIRC5 expression. Pro-angiogenic, has mitogenic activity on vascular endothelial cells and plays a role in matrix remodeling by regulating the expression of matrix metalloproteinases (MMPs) and tissue inhibitors of metalloproteinases (TIMPs). In innate immunity, modulates the activity and function of neutrophils by increasing chemotaxis and the secretion of oxygen radicals. Increases phagocytosis by macrophages and enhances secretion of pro-inflammatory mediators. Increases cytotoxic ability of NK cells. Plays a pro-inflammatory role, in synergy with IL1B, by inducing NOS2 which promotes the production of IL6, IL8 and Prostaglandin E2, through a signaling pathway that involves JAK2, PI3K, MAP2K1/MEK1 and MAPK14/p38. In adaptive immunity, promotes the switch of memory T-cells towards T helper-1 cell immune responses. Increases CD4(+)CD25(-) T-cell proliferation and reduces autophagy during TCR (T-cell receptor) stimulation, through MTOR signaling pathway activation and BCL2 up-regulation. In Pan troglodytes (Chimpanzee), this protein is Leptin (LEP).